Consider the following 180-residue polypeptide: ATP-dependent protease subunit HslV (180 aa).

Thr5 is an active-site residue. 3 residues coordinate Na(+): Gly165, Cys168, and Thr171.

It belongs to the peptidase T1B family. HslV subfamily. A double ring-shaped homohexamer of HslV is capped on each side by a ring-shaped HslU homohexamer. The assembly of the HslU/HslV complex is dependent on binding of ATP.

It is found in the cytoplasm. It carries out the reaction ATP-dependent cleavage of peptide bonds with broad specificity.. Allosterically activated by HslU binding. Functionally, protease subunit of a proteasome-like degradation complex believed to be a general protein degrading machinery. The protein is ATP-dependent protease subunit HslV of Helicobacter pylori (strain G27).